The sequence spans 1254 residues: Zinc finger protein BRUTUS (1254 aa).

A disordered region spans residues Met-1–Pro-40. Residues Ser-19 to Pro-40 are compositionally biased toward low complexity. The helical transmembrane segment at Phe-201 to Ile-221 threads the bilayer. Residues Gly-893–His-913 form a disordered region. Over residues Pro-895–Ser-906 the composition is skewed to polar residues. The CHY-type zinc finger occupies Pro-999 to Gly-1068. Positions 1006, 1008, 1019, 1020, 1026, 1029, 1030, 1036, 1048, 1051, 1061, 1066, 1076, 1079, 1090, 1091, 1094, 1097, 1109, 1110, 1113, 1116, 1124, and 1126 each coordinate Zn(2+). The CTCHY-type zinc-finger motif lies at Met-1071–Asn-1134. The RING-type; atypical zinc finger occupies Cys-1135–Cys-1176.

Interacts with the PYEL proteins bHLH115, bHLH104 and ILR3 in the nucleus. Binds zinc and iron ions. As to expression, expressed in cotyledons of seedlings, young leaves, developing and mature embryos, and other reproductive tissues including floral vasculature, funiculus, septum, and gynoecium valves.

The protein resides in the membrane. Its subcellular location is the nucleus. It functions in the pathway protein modification; protein ubiquitination. Essential protein. Negatively regulates the response to iron deficiency and thus contributes to iron homeostasis. Exhibits E3 ubiquitin-protein ligase activity in vitro. Plays a role in root growth, rhizosphere acidification, and iron reductase activity in response to iron deprivation. Facilitates 26S proteasome-mediated degradation of PYEL proteins in the absence of iron. The polypeptide is Zinc finger protein BRUTUS (Arabidopsis thaliana (Mouse-ear cress)).